A 291-amino-acid chain; its full sequence is Flavin-dependent thymidylate synthase (291 aa).

The ThyX domain occupies 31-241 (GFVRVVDYMG…PMVHAAFVEY (211 aa)). FAD-binding positions include Ser-77, 100-102 (RHR), and Glu-108. Residues 97–100 (QWVR), 108–112 (EYSAR), and Arg-180 each bind dUMP. The ThyX motif motif lies at 100–110 (RHRTASINEYS). An FAD-binding site is contributed by 196–198 (NLH). DUMP is bound at residue Arg-207. Arg-207 serves as the catalytic Involved in ionization of N3 of dUMP, leading to its activation.

It belongs to the thymidylate synthase ThyX family. As to quaternary structure, homotetramer. FAD is required as a cofactor.

It catalyses the reaction dUMP + (6R)-5,10-methylene-5,6,7,8-tetrahydrofolate + NADPH + H(+) = dTMP + (6S)-5,6,7,8-tetrahydrofolate + NADP(+). It functions in the pathway pyrimidine metabolism; dTTP biosynthesis. Catalyzes the reductive methylation of 2'-deoxyuridine-5'-monophosphate (dUMP) to 2'-deoxythymidine-5'-monophosphate (dTMP) while utilizing 5,10-methylenetetrahydrofolate (mTHF) as the methyl donor, and NADPH and FADH(2) as the reductant. The protein is Flavin-dependent thymidylate synthase of Anaplasma marginale (strain St. Maries).